A 249-amino-acid polypeptide reads, in one-letter code: 1-(5-phosphoribosyl)-5-[(5-phosphoribosylamino)methylideneamino] imidazole-4-carboxamide isomerase (249 aa).

Catalysis depends on Asp8, which acts as the Proton acceptor. The active-site Proton donor is Asp131.

It belongs to the HisA/HisF family.

It localises to the cytoplasm. The catalysed reaction is 1-(5-phospho-beta-D-ribosyl)-5-[(5-phospho-beta-D-ribosylamino)methylideneamino]imidazole-4-carboxamide = 5-[(5-phospho-1-deoxy-D-ribulos-1-ylimino)methylamino]-1-(5-phospho-beta-D-ribosyl)imidazole-4-carboxamide. It participates in amino-acid biosynthesis; L-histidine biosynthesis; L-histidine from 5-phospho-alpha-D-ribose 1-diphosphate: step 4/9. The protein is 1-(5-phosphoribosyl)-5-[(5-phosphoribosylamino)methylideneamino] imidazole-4-carboxamide isomerase of Aromatoleum aromaticum (strain DSM 19018 / LMG 30748 / EbN1) (Azoarcus sp. (strain EbN1)).